A 907-amino-acid chain; its full sequence is Cytochrome b561, DM13 and DOMON domain-containing protein At5g54830 (907 aa).

The first 24 residues, 1-24 (MCDQRPNLLGSLVLLGFFIFFVNG), serve as a signal peptide directing secretion. The DM13 domain maps to 31–139 (SSLIGHESEF…ASDFGHVLLS (109 aa)). A disordered region spans residues 144–172 (SDTSKAESPPSESNDVAPGKSNNSEPFKA). A compositionally biased stretch (polar residues) spans 153-168 (PSESNDVAPGKSNNSE). 2 consecutive DOMON domains span residues 184–329 (DKYR…WALG) and 524–645 (QQVK…WAMG). The 198-residue stretch at 653-850 (LTERNMHSVT…CVVTVAYLEY (198 aa)) folds into the Cytochrome b561 domain. The helical transmembrane segment at 685-705 (VLGVHGFMMFLAWGILLPGGI) threads the bilayer. Heme b contacts are provided by His-689 and His-723. Helical transmembrane passes span 730–750 (GLAIVFLGLLFAVAELNGFSF), 754–774 (HVKFGFTAIVLACAQPVNAWL), 795–815 (SHSIVGQSAVVVGVVALFTGM), and 829–849 (GLNLALGLWVFLCVVTVAYLE). 2 residues coordinate heme b: His-754 and His-796. The span at 884-897 (GGFRDKDDEDRNGG) shows a compositional bias: basic and acidic residues. Residues 884–907 (GGFRDKDDEDRNGGRMEIQLEPLK) are disordered.

It depends on heme b as a cofactor.

It localises to the membrane. May act as a catecholamine-responsive trans-membrane electron transporter. The protein is Cytochrome b561, DM13 and DOMON domain-containing protein At5g54830 of Arabidopsis thaliana (Mouse-ear cress).